A 954-amino-acid chain; its full sequence is cGMP-specific 3',5'-cyclic phosphodiesterase alpha (954 aa).

The Cytoplasmic portion of the chain corresponds to 1–259; the sequence is MMDTKVDQTI…NTFYSSFPFK (259 aa). The helical transmembrane segment at 260–280 threads the bilayer; sequence LFLHSLYMIFICFIYFVVLYF. The Extracellular portion of the chain corresponds to 281–296; the sequence is MLLKKIYTHPFIFHLS. Residues 297–317 traverse the membrane as a helical segment; the sequence is VLKFLFDIIFFLSFILYPLFL. Residues 318–327 lie on the Cytoplasmic side of the membrane; sequence RLKRIDKIIY. The chain crosses the membrane as a helical span at residues 328 to 348; the sequence is SSYISSYIFVCVTFLYSFIIF. The Extracellular portion of the chain corresponds to 349 to 365; that stretch reads KCSSYSVKMNSNTYQNN. The chain crosses the membrane as a helical span at residues 366–386; sequence FVFQNMLFLLINIIYICIFCF. Residues 387–401 are Cytoplasmic-facing; the sequence is LKNYMILYSFLYNCR. Residues 402-422 form a helical membrane-spanning segment; sequence FSIFCILFIFLYYYLFFSLDF. At 423–432 the chain is on the extracellular side; that stretch reads YRIIHLPLDN. Residues 433–453 traverse the membrane as a helical segment; sequence FFFPFLCFLFFSFLFIFKIIM. Topologically, residues 454–954 are cytoplasmic; sequence SLYYEYVYEK…LSKLELIKFE (501 aa). Residues 586-930 enclose the PDEase domain; it reads NQEETKSFLS…ERWESHKNDN (345 aa). The Proton donor role is filled by histidine 680. 680–684 is a 3',5'-cyclic GMP binding site; sequence HTSLH. Positions 684, 720, 721, and 832 each coordinate Zn(2+). Aspartate 721, aspartate 832, and glutamine 884 together coordinate 3',5'-cyclic GMP. Residue aspartate 721 participates in Mg(2+) binding.

Belongs to the cyclic nucleotide phosphodiesterase family. The cofactor is Zn(2+). Mg(2+) is required as a cofactor.

The protein resides in the membrane. It catalyses the reaction 3',5'-cyclic GMP + H2O = GMP + H(+). It participates in purine metabolism; 3',5'-cyclic GMP degradation; GMP from 3',5'-cyclic GMP: step 1/1. Not inhibited by cAMP. Inhibited by zaprinast. Its function is as follows. Specifically hydrolyzes the second messenger cGMP, which is a key regulator of many important physiological processes. This chain is cGMP-specific 3',5'-cyclic phosphodiesterase alpha, found in Plasmodium falciparum (isolate 3D7).